Reading from the N-terminus, the 235-residue chain is C-&gt;U-editing enzyme APOBEC-1 (235 aa).

The CMP/dCMP-type deaminase domain maps to 10 to 131; the sequence is GDATLRRRIK…MDQQHRQGLK (122 aa). Histidine 60 contacts Zn(2+). Residue glutamate 62 is the Proton donor of the active site. 2 residues coordinate Zn(2+): cysteine 92 and cysteine 95.

It belongs to the cytidine and deoxycytidylate deaminase family. In terms of assembly, homodimer. Interacts with A1CF; form an mRNA editing complex. Interacts with RBM47; form an mRNA editing complex. Found in a complex with CELF2/CUGBP2 and A1CF. Interacts with HNRPAB. Interacts with SYNCRIP. Zn(2+) serves as cofactor.

Its subcellular location is the cytoplasm. It localises to the nucleus. The catalysed reaction is a cytidine in mRNA + H2O + H(+) = a uridine in mRNA + NH4(+). It catalyses the reaction cytidine(6666) in apoB mRNA + H2O + H(+) = uridine(6666) in apoB mRNA + NH4(+). In terms of biological role, cytidine deaminase catalyzing the cytidine to uridine postranscriptional editing of a variety of mRNAs. Form complexes with cofactors that confer differential editing activity and selectivity. Responsible for the postranscriptional editing of a CAA codon for Gln to a UAA codon for stop in the apolipoprotein B mRNA. Also involved in CGA (Arg) to UGA (Stop) editing in the NF1 mRNA. May also play a role in the epigenetic regulation of gene expression by participating in DNA demethylation. In Monodelphis domestica (Gray short-tailed opossum), this protein is C-&gt;U-editing enzyme APOBEC-1.